A 2643-amino-acid polypeptide reads, in one-letter code: Ankyrin repeat domain-containing protein 11 (2643 aa).

Disordered stretches follow at residues 1 to 90 (MPKG…KEPV) and 128 to 170 (SANS…RGET). Basic and acidic residues-rich tracts occupy residues 21–54 (MVEK…VRER) and 69–90 (EQKD…KEPV). The segment covering 128–155 (SANSPVDTTPKHPSQSTVCQKGTPNSAS) has biased composition (polar residues). Over residues 156 to 170 (KTKDKVNKRNERGET) the composition is skewed to basic and acidic residues. ANK repeat units follow at residues 167–196 (RGET…DVNV), 200–229 (AGWT…EVNT), 233–262 (DDDT…NPQQ), and 266–292 (KGET…YTSS). Serine 276 is modified (phosphoserine). Residues 289 to 365 (YTSSEESSTE…DRVPPVDDKH (77 aa)) form a disordered region. The span at 295–305 (SSTESSEEEDA) shows a compositional bias: acidic residues. Polar residues predominate over residues 309–320 (APSSSVDGNNTD). Basic and acidic residues-rich tracts occupy residues 322-335 (EFEK…KNPE) and 356-365 (DRVPPVDDKH). Phosphoserine is present on serine 408. Threonine 410 carries the phosphothreonine modification. At serine 411 the chain carries Phosphoserine. Disordered stretches follow at residues 423-504 (GEKL…CLKG), 517-651 (SLSA…GQCS), and 727-805 (DANK…DKEK). The segment covering 438 to 451 (KARESSSSRQQKEK) has biased composition (basic and acidic residues). The span at 452–462 (NKLKKKRKKET) shows a compositional bias: basic residues. Basic and acidic residues predominate over residues 463–475 (KGKEVRFGKRSDK). Residues 484–494 (ESSESEEDDGD) show a composition bias toward acidic residues. Positions 517 to 528 (SLSASSTSSHGS) are enriched in low complexity. Over residues 537–550 (GHTDQHTKHWRTDN) the composition is skewed to basic and acidic residues. Over residues 557–574 (PAWSEVSSLSDSSRTGLT) the composition is skewed to polar residues. Residues 575–588 (SESDCSSEGSSVES) show a composition bias toward low complexity. Composition is skewed to basic residues over residues 591 to 602 (PTRRKQEHRKRG) and 633 to 646 (VKKH…KHKE). A Phosphoserine modification is found at serine 838. Composition is skewed to basic and acidic residues over residues 918-931 (KNSE…EKHK) and 938-962 (SEKD…IRSE). Disordered regions lie at residues 918-962 (KNSE…IRSE), 977-1037 (SFKD…STLD), and 1051-1074 (EKKD…FDQL). Serine 1070 bears the Phosphoserine mark. Residue threonine 1111 is modified to Phosphothreonine. Serine 1114 is subject to Phosphoserine. 2 disordered regions span residues 1114-1388 (SEDE…KDAS) and 1420-1711 (LFSS…TPSC). Composition is skewed to basic and acidic residues over residues 1133–1297 (DTQR…DKIS), 1326–1343 (AEDK…LREK), 1355–1388 (KSHE…KDAS), 1420–1444 (LFSS…KELK), 1464–1535 (RERW…KGDS), 1546–1564 (VPSR…KLLG), 1577–1587 (LSQKDLEIEER), and 1595–1640 (MKQM…KVKE). Serine 1676 bears the Phosphoserine mark. A compositionally biased stretch (polar residues) spans 1678-1695 (RTEQSRPTGVPTPTSVVS). Residues serine 1777 and serine 1832 each carry the phosphoserine modification. Residues tyrosine 1835 and tyrosine 1836 each carry the phosphotyrosine modification. 2 positions are modified to phosphoserine: serine 1837 and serine 1844. Disordered stretches follow at residues 1863–1900 (PPDS…GLPL), 1981–2027 (SPKH…EVKD), and 2111–2386 (HEAF…STQQ). 2 positions are modified to phosphoserine: serine 1981 and serine 2139. Pro residues-rich tracts occupy residues 2150–2160 (PVPPAESPPGP) and 2175–2184 (EEPPAPPPQE). Low complexity predominate over residues 2273–2284 (SAEASCVVAAAE). Positions 2297–2315 (PEPKPTSEVPKAPKVEEVP) are enriched in basic and acidic residues. Positions 2349–2643 (AKGRASEEED…VNDDFVLLPA (295 aa)) are important for protein degradation. Residues 2371–2386 (RSSQQLQQQLNTSTQQ) are compositionally biased toward low complexity.

In terms of assembly, interacts with the PAS region of the p160 coactivators. Subject to proteasomal degradation which is probably essential to regulate its activity.

It localises to the nucleus. In terms of biological role, chromatin regulator which modulates histone acetylation and gene expression in neural precursor cells. May recruit histone deacetylases (HDACs) to the p160 coactivators/nuclear receptor complex to inhibit ligand-dependent transactivation. Has a role in proliferation and development of cortical neural precursors. May also regulate bone homeostasis. The chain is Ankyrin repeat domain-containing protein 11 from Mus musculus (Mouse).